Reading from the N-terminus, the 252-residue chain is Imidazole glycerol phosphate synthase subunit HisF (252 aa).

Catalysis depends on residues D11 and D130.

The protein belongs to the HisA/HisF family. As to quaternary structure, heterodimer of HisH and HisF.

It localises to the cytoplasm. The catalysed reaction is 5-[(5-phospho-1-deoxy-D-ribulos-1-ylimino)methylamino]-1-(5-phospho-beta-D-ribosyl)imidazole-4-carboxamide + L-glutamine = D-erythro-1-(imidazol-4-yl)glycerol 3-phosphate + 5-amino-1-(5-phospho-beta-D-ribosyl)imidazole-4-carboxamide + L-glutamate + H(+). It participates in amino-acid biosynthesis; L-histidine biosynthesis; L-histidine from 5-phospho-alpha-D-ribose 1-diphosphate: step 5/9. Functionally, IGPS catalyzes the conversion of PRFAR and glutamine to IGP, AICAR and glutamate. The HisF subunit catalyzes the cyclization activity that produces IGP and AICAR from PRFAR using the ammonia provided by the HisH subunit. The chain is Imidazole glycerol phosphate synthase subunit HisF from Polynucleobacter necessarius subsp. necessarius (strain STIR1).